A 335-amino-acid chain; its full sequence is MMEGHMLFFLLVVVVQFLTGVLANGLIVVVNAIDLIMWKKMAPLDLLLFCLATSRIILQLCILFAQLGLSCLVRHTLFADNVTFVYIINELSLWFATWLGVFYCAKIATIPHPLFLWLKMRISRLVPWLILASVVYVTVTTFIHSRETSELPKQIFISFFSKNTTRVRPAHATLLSVFVFGLTLPFLIFTVAVLLLLSSLWNHSRQMRTMVGTREPSRHALVSAMLSILSFLILYLSHDMVAVLICTQGLHFGSRTFAFCLLVIGMYPSLHSIVLILGNPKLKRNAKTFIVHCKCCHCARAWVTSRNPRLSDLPVPATHHSANKTSCSEACIMPS.

Residues 1–7 (MMEGHML) lie on the Extracellular side of the membrane. Residues 8-28 (FFLLVVVVQFLTGVLANGLIV) form a helical membrane-spanning segment. At 29 to 43 (VVNAIDLIMWKKMAP) the chain is on the cytoplasmic side. The chain crosses the membrane as a helical span at residues 44-64 (LDLLLFCLATSRIILQLCILF). Residues 65-81 (AQLGLSCLVRHTLFADN) are Extracellular-facing. Asn81 carries an N-linked (GlcNAc...) asparagine glycan. Residues 82–102 (VTFVYIINELSLWFATWLGVF) traverse the membrane as a helical segment. Topologically, residues 103 to 124 (YCAKIATIPHPLFLWLKMRISR) are cytoplasmic. Residues 125 to 145 (LVPWLILASVVYVTVTTFIHS) form a helical membrane-spanning segment. At 146 to 176 (RETSELPKQIFISFFSKNTTRVRPAHATLLS) the chain is on the extracellular side. A glycan (N-linked (GlcNAc...) asparagine) is linked at Asn163. The chain crosses the membrane as a helical span at residues 177–197 (VFVFGLTLPFLIFTVAVLLLL). At 198–224 (SSLWNHSRQMRTMVGTREPSRHALVSA) the chain is on the cytoplasmic side. Residues 225-245 (MLSILSFLILYLSHDMVAVLI) traverse the membrane as a helical segment. At 246 to 256 (CTQGLHFGSRT) the chain is on the extracellular side. Residues 257–277 (FAFCLLVIGMYPSLHSIVLIL) traverse the membrane as a helical segment. At 278–335 (GNPKLKRNAKTFIVHCKCCHCARAWVTSRNPRLSDLPVPATHHSANKTSCSEACIMPS) the chain is on the cytoplasmic side.

Belongs to the G-protein coupled receptor T2R family. Expressed in subsets of taste receptor cells of the tongue and palate epithelium and exclusively in gustducin-positive cells. Expressed in 15% taste bud cells in circumvallate and foliate papillae but only in 2% in fungiform papillae. Expressed in the gastro and duodenal tissue. Not expressed in colon, liver, heart and kidney.

The protein resides in the membrane. Functionally, gustducin-coupled receptor implicated in the perception of bitter compounds in the oral cavity and the gastrointestinal tract. Signals through PLCB2 and the calcium-regulated cation channel TRPM5. This is Taste receptor type 2 member 119 (Tas2r119) from Mus musculus (Mouse).